Consider the following 290-residue polypeptide: Fructose-bisphosphate aldolase (290 aa).

Ser-51 is a D-glyceraldehyde 3-phosphate binding site. Asp-86 functions as the Proton donor in the catalytic mechanism. Zn(2+) is bound by residues His-87, Asp-107, Glu-137, and His-179. Gly-180 contributes to the dihydroxyacetone phosphate binding site. His-208 provides a ligand contact to Zn(2+). Dihydroxyacetone phosphate-binding positions include 209-211 (GGS) and 230-233 (NINT).

This sequence belongs to the class II fructose-bisphosphate aldolase family. As to quaternary structure, homodimer. Zn(2+) is required as a cofactor.

It carries out the reaction beta-D-fructose 1,6-bisphosphate = D-glyceraldehyde 3-phosphate + dihydroxyacetone phosphate. It functions in the pathway carbohydrate degradation; glycolysis; D-glyceraldehyde 3-phosphate and glycerone phosphate from D-glucose: step 4/4. In terms of biological role, catalyzes the aldol condensation of dihydroxyacetone phosphate (DHAP or glycerone-phosphate) with glyceraldehyde 3-phosphate (G3P) to form fructose 1,6-bisphosphate (FBP) in gluconeogenesis and the reverse reaction in glycolysis. In Ureaplasma parvum serovar 3 (strain ATCC 700970), this protein is Fructose-bisphosphate aldolase (fba).